We begin with the raw amino-acid sequence, 234 residues long: Lipoprotein-releasing system ATP-binding protein LolD (234 aa).

The 227-residue stretch at 7–233 folds into the ABC transporter domain; that stretch reads LQCINLCKRY…LQHHLTLVGA (227 aa). 43–50 is a binding site for ATP; that stretch reads GSSGSGKS.

This sequence belongs to the ABC transporter superfamily. Lipoprotein translocase (TC 3.A.1.125) family. The complex is composed of two ATP-binding proteins (LolD) and two transmembrane proteins (LolC and LolE).

Its subcellular location is the cell inner membrane. Part of the ABC transporter complex LolCDE involved in the translocation of mature outer membrane-directed lipoproteins, from the inner membrane to the periplasmic chaperone, LolA. Responsible for the formation of the LolA-lipoprotein complex in an ATP-dependent manner. In Yersinia pestis bv. Antiqua (strain Antiqua), this protein is Lipoprotein-releasing system ATP-binding protein LolD.